Here is a 504-residue protein sequence, read N- to C-terminus: 2,3-bisphosphoglycerate-independent phosphoglycerate mutase (504 aa).

The Mn(2+) site is built by Asp11 and Ser61. Residue Ser61 is the Phosphoserine intermediate of the active site. Substrate is bound by residues His122, Arg152–Asp153, Arg183, Arg189, Arg255–Arg258, and Lys329. Residues Asp396, His400, Asp437, His438, and His455 each contribute to the Mn(2+) site.

Belongs to the BPG-independent phosphoglycerate mutase family. Monomer. Mn(2+) is required as a cofactor.

It carries out the reaction (2R)-2-phosphoglycerate = (2R)-3-phosphoglycerate. Its pathway is carbohydrate degradation; glycolysis; pyruvate from D-glyceraldehyde 3-phosphate: step 3/5. Functionally, catalyzes the interconversion of 2-phosphoglycerate and 3-phosphoglycerate. The chain is 2,3-bisphosphoglycerate-independent phosphoglycerate mutase from Bacteroides fragilis (strain ATCC 25285 / DSM 2151 / CCUG 4856 / JCM 11019 / LMG 10263 / NCTC 9343 / Onslow / VPI 2553 / EN-2).